Here is a 455-residue protein sequence, read N- to C-terminus: Cerebellar degeneration-related protein 2 (455 aa).

2 coiled-coil regions span residues 37 to 141 (LLDR…SSQG) and 191 to 264 (EEEN…QAEH). Positions 132–142 (VEELKSSSQGR) are enriched in polar residues. Positions 132 to 152 (VEELKSSSQGRGRQKACDQEK) are disordered. S310 carries the post-translational modification Phosphoserine. The tract at residues 395-419 (SEAGASGWEPTPVSPESISSPTTTP) is disordered. The segment covering 403–419 (EPTPVSPESISSPTTTP) has biased composition (low complexity).

Belongs to the CDR2 family. In terms of tissue distribution, expressed in brain and testis (at protein level). Expressed in the cerebellum, cerebral cortex, heart, lung, spleen, ovary, kidney and testis.

This chain is Cerebellar degeneration-related protein 2 (Cdr2), found in Mus musculus (Mouse).